Here is a 542-residue protein sequence, read N- to C-terminus: Hydroxylamine reductase (542 aa).

Residues C3, C6, C15, and C21 each contribute to the [4Fe-4S] cluster site. Residues H243, E267, C311, C398, C426, C451, E485, and K487 each contribute to the hybrid [4Fe-2O-2S] cluster site. C398 bears the Cysteine persulfide mark.

Belongs to the HCP family. Requires [4Fe-4S] cluster as cofactor. Hybrid [4Fe-2O-2S] cluster is required as a cofactor.

It localises to the cytoplasm. It catalyses the reaction A + NH4(+) + H2O = hydroxylamine + AH2 + H(+). In terms of biological role, catalyzes the reduction of hydroxylamine to form NH(3) and H(2)O. This is Hydroxylamine reductase from Syntrophobacter fumaroxidans (strain DSM 10017 / MPOB).